The following is an 860-amino-acid chain: MQEQYRPEEIESKVQLHWDEKRTFEVTEDESKEKYYCLSMLPYPSGRLHMGHVRNYTIGDVVARYQRMLGKNVLQPIGWDAFGLPAEGAAVKNNTAPAPWTYDNIAYMKNQLKTLGFGYDWSREIATCTPEYYRWEQKFFTELYKKGLVYKKTSAVNWCPNDQTVLANEQVIDGCCWRCDTKVERKEIPQWFIKITAYADELLRDLDKLDHWPDTVKTMQRNWIGRSEGVEITFDVKGYDNTLTVYTTRPDTFMGATYLAVAAGHPLAQKAAANNAELAAFIDECRNTKVAEAEMATMEKKGVDTGYKAIHPLTGEEIPVWAANFVLMEYGTGAVMAVPGHDQRDYEFASKYGLTIKPVILAADSSEPDLSEQALTEKGVLFNSGEFDGLAFEAAFNAIADKLAEKGVGERKVNYRLRDWGVSRQRYWGAPIPMVTLEDGTVLPTPEDQLPVILPEDVVMDGITSPIKADPEWAKTTVNGMPALRETDTFDTFMESSWYYARYTCPQYQEGMLDSKAANYWLPVDIYIGGIEHAIMHLLYFRFFHKLMRDAGMVTSDEPAKQLLCQGMVLADAFYYVGENGERNWVSPVDAIVERDEKGRIVKAKDAAGHELVYTGMSKMSKSKNNGIDPQVMVERYGADTVRLFMMFASPADMTLEWQESGVEGANRFIKRVWKLVYEHTAKGPVAALNVDALSEDQKALRRDVHKTIAKVTDDIGRRQTFNTAIAAIMELMNKLAKAPQEGEQDRALLQEALQAVVRMLNPFTPHVCFTLWQELGGEGDIDNAPWPVADEQAMVENTTLVVVQVNGKVRGKITVAVDATEEQVRERAGQEHLVAKYLDGVTVRKVIYVPGKLLNLVVG.

Positions 42–52 (PYPSGRLHMGH) match the 'HIGH' region motif. Residues 619–623 (KMSKS) carry the 'KMSKS' region motif. Residue lysine 622 coordinates ATP.

The protein belongs to the class-I aminoacyl-tRNA synthetase family.

It localises to the cytoplasm. The catalysed reaction is tRNA(Leu) + L-leucine + ATP = L-leucyl-tRNA(Leu) + AMP + diphosphate. The protein is Leucine--tRNA ligase of Salmonella choleraesuis (strain SC-B67).